The chain runs to 342 residues: Aquaporin-8 (342 aa).

Helical transmembrane passes span 55-75, 98-118, and 126-146; these read FLAVFVLMVFIEGSAATAIFT, VAGGVSGAFLNPAVALAFAVL, and CIFYMISQYLAAFVASCTMFA. Residues 108–110 carry the NPA 1 motif; it reads NPA. N166 is a glycosylation site (N-linked (GlcNAc...) asparagine). The next 2 helical transmembrane spans lie at 184-204 and 215-235; these read TAFADQVFCTAILLIVVLAMC and FLPIAIGLLIITISCTLSYNA. The short motif at 240–242 is the NPA 2 element; sequence NPS. The chain crosses the membrane as a helical span at residues 266-286; sequence YTWFFVPVLGSHCGAIIGGAI. Over residues 302 to 327 the composition is skewed to polar residues; the sequence is TNSVSSMSYNEDNSTLTKRKQVSNIV. Residues 302–342 are disordered; the sequence is TNSVSSMSYNEDNSTLTKRKQVSNIVHDSKGAKGSSTAPVN. N-linked (GlcNAc...) asparagine glycosylation is present at N314.

The protein belongs to the MIP/aquaporin (TC 1.A.8) family.

It localises to the cell membrane. Its function is as follows. Aquaglyceroporin that may modulate the water content and osmolytes during anhydrobiosis. This is Aquaporin-8 from Milnesium tardigradum (Water bear).